Here is a 436-residue protein sequence, read N- to C-terminus: Protein 60A (436 aa).

Positions 1–27 are cleaved as a signal peptide; it reads MTASLVVLPSLWLILIIFTAPYTHCTQ. Residues 28-317 constitute a propeptide that is removed on maturation; that stretch reads SGIYIDNGKD…STLHQRKKSK (290 aa). Residues asparagine 102, asparagine 114, asparagine 217, and asparagine 229 are each glycosylated (N-linked (GlcNAc...) asparagine). The tract at residues 293-322 is disordered; sequence IKSTSGHSTQKRTKRSTLHQRKKSKSEPVN. Over residues 301–316 the composition is skewed to basic residues; the sequence is TQKRTKRSTLHQRKKS. Cystine bridges form between cysteine 335–cysteine 401, cysteine 364–cysteine 433, and cysteine 368–cysteine 435. Asparagine 377 is a glycosylation site (N-linked (GlcNAc...) asparagine).

It belongs to the TGF-beta family. As to quaternary structure, homodimer; disulfide-linked.

The protein localises to the secreted. This Drosophila virilis (Fruit fly) protein is Protein 60A (gbb).